The following is a 77-amino-acid chain: UPF0349 protein lin2491 (77 aa).

It belongs to the UPF0349 family.

This is UPF0349 protein lin2491 from Listeria innocua serovar 6a (strain ATCC BAA-680 / CLIP 11262).